A 1042-amino-acid chain; its full sequence is Signal-induced proliferation-associated protein 1 (1042 aa).

Disordered regions lie at residues 1–87 and 132–153; these read MPMW…TSTR and SQGMGSHSEASSGTLASAEDQA. Thr64 carries the phosphothreonine modification. At Ser67 the chain carries Phosphoserine. Over residues 134–146 the composition is skewed to polar residues; the sequence is GMGSHSEASSGTL. Phosphoserine is present on residues Ser182, Ser304, and Ser314. A Rap-GAP domain is found at 321-539; it reads LLTLDEQVLS…RTRQQYLQDL (219 aa). One can recognise a PDZ domain in the interval 687–763; the sequence is ELALPRDGQG…VCVTVLPPDE (77 aa). Phosphoserine is present on residues Ser817, Ser839, and Ser912. Positions 830 to 903 are disordered; sequence EFLHSQNSLS…PAPELRASFL (74 aa). A compositionally biased stretch (low complexity) spans 832 to 845; that stretch reads LHSQNSLSPRSSLS. Residues 946–980 form a disordered region; that stretch reads LSREGQPIPESGDPKGTPKSDAEPEPGNLSEKVSH. Over residues 957 to 967 the composition is skewed to basic and acidic residues; it reads GDPKGTPKSDA. Positions 972–1034 form a coiled coil; it reads GNLSEKVSHL…TRLLLASKQL (63 aa).

Interacts with RRP1B; the interaction leads to inhibition of SIPA1 GTPase activity. Expressed in fetal as well as in adult tissues. Expressed abundantly in the lymphoid tissues such as thymus, spleen and peripheral blood lymphocytes and also shows a significant expression in the spinal cord.

Its subcellular location is the nucleus. It localises to the cytoplasm. The protein resides in the perinuclear region. It is found in the endomembrane system. Its function is as follows. GTPase activator for the nuclear Ras-related regulatory proteins Rap1 and Rap2 in vitro, converting them to the putatively inactive GDP-bound state. Affects cell cycle progression. In Homo sapiens (Human), this protein is Signal-induced proliferation-associated protein 1 (SIPA1).